We begin with the raw amino-acid sequence, 1105 residues long: ATP-dependent DNA helicase MPH1 (1105 aa).

Residues 94-261 enclose the Helicase ATP-binding domain; the sequence is IVQRAFYDNL…EIIDNLSISK (168 aa). Residue 107–114 participates in ATP binding; that stretch reads LPTGLGKT. Residues 209-212 carry the DEAH box motif; sequence DEAH. The Helicase C-terminal domain occupies 468 to 641; that stretch reads SIERIGSNLR…LITLAQSNRI (174 aa). 5 disordered regions span residues 493-534, 684-708, 758-824, 850-880, and 918-953; these read EEAY…AQIK, KGKK…EKRF, IQSK…PKLG, LVTG…ECAP, and VSDD…FDEG. A compositionally biased stretch (basic residues) spans 499-511; sequence KGKKGRTKGKATK. Residues 518–532 are compositionally biased toward basic and acidic residues; it reads TPERSTSRTSSEDAQ. Basic residues predominate over residues 684–705; sequence KGKKVTKSKSKSKSNSKSKKIE. Over residues 764 to 787 the composition is skewed to basic and acidic residues; that stretch reads PVKENQSKRPNSEHICEEDSRQET. Residues 788-799 show a composition bias toward low complexity; the sequence is ENNSNESNGSFE. Residues 927 to 943 are compositionally biased toward polar residues; the sequence is DSINNQQLHKNKNLGST. Over residues 944 to 953 the composition is skewed to acidic residues; sequence SDDDDAFDEG.

The protein belongs to the DEAD box helicase family. DEAH subfamily. FANCM sub-subfamily. As to quaternary structure, interacts with the MHF histone-fold complex to form the FANCM-MHF complex.

It localises to the nucleus. It carries out the reaction ATP + H2O = ADP + phosphate + H(+). Functionally, ATP-dependent DNA helicase involved in DNA damage repair by homologous recombination and in genome maintenance. Capable of unwinding D-loops. Plays a role in limiting crossover recombinants during mitotic DNA double-strand break (DSB) repair. Component of a FANCM-MHF complex which promotes gene conversion at blocked replication forks, probably by reversal of the stalled fork. This is ATP-dependent DNA helicase MPH1 from Debaryomyces hansenii (strain ATCC 36239 / CBS 767 / BCRC 21394 / JCM 1990 / NBRC 0083 / IGC 2968) (Yeast).